Reading from the N-terminus, the 423-residue chain is Endochitinase 1 (423 aa).

An N-terminal signal peptide occupies residues 1–22 (MPSLFAQSLAIIATLQATLGLA). Residues 39 to 401 (YVNAVYFTNW…GTSSNKLGGP (363 aa)) form the GH18 domain. N-linked (GlcNAc...) asparagine glycans are attached at residues Asn-74, Asn-78, and Asn-96. Residues 103–104 (GT) and 130–133 (GGWT) each bind chitin. Residue Glu-172 is the Proton donor of the active site. Residues Tyr-173 and 238–241 (MAYD) each bind chitin. Residue Asn-248 is glycosylated (N-linked (GlcNAc...) asparagine). Position 378 (Trp-378) interacts with chitin. Residues 380 to 423 (ASSDRSGSQSLIGTSSNKLGGPDSTENLLNYPDSKYDNMRKQMA) form a disordered region. Residues 383–407 (DRSGSQSLIGTSSNKLGGPDSTENL) show a composition bias toward polar residues. Basic and acidic residues predominate over residues 413–423 (SKYDNMRKQMA).

The protein belongs to the glycosyl hydrolase 18 family. Chitinase class V subfamily.

The protein localises to the secreted. The catalysed reaction is Random endo-hydrolysis of N-acetyl-beta-D-glucosaminide (1-&gt;4)-beta-linkages in chitin and chitodextrins.. Its function is as follows. Secreted chitinase involved in the degradation of chitin, a component of the cell walls of fungi and exoskeletal elements of some animals (including worms and arthropods). Participates in the infection process and directly acts in the penetration process of the host cuticle. This is Endochitinase 1 (chit1) from Metarhizium anisopliae (Entomophthora anisopliae).